The following is a 191-amino-acid chain: Phospholipase A2-delta (191 aa).

The signal sequence occupies residues 1-25 (MIRGGALTHVALGLTVFLLLAVVHS). Intrachain disulfides connect Cys29–Cys56, Cys33–Cys62, Cys38–Cys115, Cys49–Cys69, Cys68–Cys93, and Cys75–Cys86. Tyr48, Gly50, and Tyr53 together coordinate Ca(2+). Residue His72 is part of the active site. Residue Asp73 participates in Ca(2+) binding. Residues 161 to 191 (KADTKDGLGTNQGPQTKDGSKVSVPMNPSPS) form a disordered region.

Belongs to the phospholipase A2 family. Requires Ca(2+) as cofactor. As to expression, specifically expressed in flowers but at a low level. Detected specifically in the pollen.

It is found in the secreted. The protein resides in the endoplasmic reticulum. The catalysed reaction is a 1,2-diacyl-sn-glycero-3-phosphocholine + H2O = a 1-acyl-sn-glycero-3-phosphocholine + a fatty acid + H(+). Its function is as follows. PA2 catalyzes the calcium-dependent hydrolysis of the 2-acyl groups in 3-sn-phosphoglycerides. Releases lysophospholipids (LPLs) and free fatty acids (FFAs) from membrane phospholipids in response to hormones and other external stimuli. Plays a role in pollen development and germination and tube growth. This is Phospholipase A2-delta (PLA2-DELTA) from Arabidopsis thaliana (Mouse-ear cress).